We begin with the raw amino-acid sequence, 255 residues long: EEF1A lysine methyltransferase 4 (255 aa).

Positions 26 and 30 each coordinate S-adenosyl-L-methionine. A Phosphotyrosine modification is found at Tyr39. Residues Trp41, Gly66, 88 to 89 (DY), 113 to 114 (DV), and Lys130 each bind S-adenosyl-L-methionine. Residues 129-134 (EKGTLD) carry the Required for methyltransferase activity motif.

Belongs to the methyltransferase superfamily.

The catalysed reaction is L-lysyl-[protein] + S-adenosyl-L-methionine = N(6)-methyl-L-lysyl-[protein] + S-adenosyl-L-homocysteine + H(+). It carries out the reaction N(6)-methyl-L-lysyl-[protein] + S-adenosyl-L-methionine = N(6),N(6)-dimethyl-L-lysyl-[protein] + S-adenosyl-L-homocysteine + H(+). The enzyme catalyses N(6),N(6)-dimethyl-L-lysyl-[protein] + S-adenosyl-L-methionine = N(6),N(6),N(6)-trimethyl-L-lysyl-[protein] + S-adenosyl-L-homocysteine + H(+). Its function is as follows. Protein-lysine methyltransferase that efficiently catalyzes three successive methylations on 'Lys-36' in eukaryotic translation elongation factor 1 alpha (EEF1A1 or EEF1A2). This Bos taurus (Bovine) protein is EEF1A lysine methyltransferase 4.